The chain runs to 183 residues: Ly6/PLAUR domain-containing protein 6B (183 aa).

The first 39 residues, 1–39, serve as a signal peptide directing secretion; sequence MLYKSSDRPAHKVSMLLLCHALAIAVVQIVIFSESWAFA. A UPAR/Ly6 domain is found at 60-151; the sequence is FKCFTCENAG…VELPTNHTNA (92 aa). The tract at residues 60-154 is sufficient for inhibiting alpha-7 nAChR currents; that stretch reads FKCFTCENAG…PTNHTNAVFA (95 aa). 6 disulfides stabilise this stretch: C62-C90, C65-C74, C83-C109, C115-C134, C120-C131, and C135-C140. A lipid anchor (GPI-anchor amidated serine) is attached at S164. The propeptide at 165–183 is removed in mature form; sequence SAPTLYLPVLAWVFVLPLL.

The protein resides in the cell membrane. Its function is as follows. Likely acts as a modulator of nicotinic acetylcholine receptors (nAChRs) activity. In vitro acts on nAChRs in a subtype- and stoichiometry-dependent manner. Modulates specifically alpha-3(3):beta-4(2) nAChRs by enhancing the sensitivity to ACh, decreasing ACh-induced maximal current response and increasing the rate of desensitization to ACh; has no effect on alpha-7 homomeric nAChRs; modulates alpha-3(2):alpha-5:beta-4(2) nAChRs in the context of CHRNA5/alpha-5 variant Asn-398 but not its wild-type sequence. However, according to another report in vitro it can weakly inhibits alpha-7 nAChRs. The chain is Ly6/PLAUR domain-containing protein 6B (LYPD6B) from Homo sapiens (Human).